We begin with the raw amino-acid sequence, 400 residues long: MNKTVGSTLLVAGTMIGAGMLAMPLTSAGIGFGFTLVLLLGLWALLTFSALLFVELYQTAESDAGIGTLAEQYFGKTGRIIATAVLIIFLYALIAAYISGGGSLLKDLLPESFGDKVSVLLFTVIFGSFIVIGTHSVDKINRVLFFVMLAAFAVVLSLMLPEIKFDNLMATPIDKALIISASPVFFTAFGFHGSIPSLNKYLDGNVKALRFSILVGSAITLCAYILWQLSTHGLLTQNEFLQILKEDATLNGLVKATFAITGSNVIASAVKLFSTLALITSFLGVGLGLLECIEDLLKRSFNVTAGRISLGLLTFIPPLVFALFYPEGFILALGYAGQMFAFYAVVLPVSLVWKARRAHANLPYKVWGGNLTLIIVLVLGVLITSIPFAIRAGYLPFVVG.

A run of 12 helical transmembrane segments spans residues 5–25 (VGST…AMPL), 34–54 (FTLV…LLFV), 80–100 (IIAT…YISG), 117–137 (VSVL…THSV), 143–163 (VLFF…LPEI), 176–196 (ALII…GSIP), 211–231 (FSIL…QLST), 250–270 (LNGL…ASAV), 273–293 (FSTL…LECI), 313–333 (LTFI…ILAL), 335–355 (YAGQ…VWKA), and 370–390 (NLTL…PFAI).

It belongs to the amino acid/polyamine transporter 2 family. Mtr/TnaB/TyrP permease subfamily.

The protein resides in the cell inner membrane. It catalyses the reaction L-tyrosine(in) + H(+)(in) = L-tyrosine(out) + H(+)(out). Transports tyrosine across the cytoplasmic membrane. The transport system is energized by the proton motive force. The polypeptide is Tyrosine-specific transport system 1 (tyrP-A) (Haemophilus influenzae (strain ATCC 51907 / DSM 11121 / KW20 / Rd)).